A 303-amino-acid polypeptide reads, in one-letter code: Protoheme IX farnesyltransferase (303 aa).

Helical transmembrane passes span methionine 25 to leucine 45, isoleucine 54 to leucine 74, leucine 118 to valine 138, tryptophan 151 to isoleucine 171, leucine 177 to leucine 197, leucine 230 to leucine 250, and phenylalanine 280 to isoleucine 300.

This sequence belongs to the UbiA prenyltransferase family. Protoheme IX farnesyltransferase subfamily. In terms of assembly, interacts with CtaA.

It localises to the cell membrane. It carries out the reaction heme b + (2E,6E)-farnesyl diphosphate + H2O = Fe(II)-heme o + diphosphate. It participates in porphyrin-containing compound metabolism; heme O biosynthesis; heme O from protoheme: step 1/1. In terms of biological role, converts heme B (protoheme IX) to heme O by substitution of the vinyl group on carbon 2 of heme B porphyrin ring with a hydroxyethyl farnesyl side group. The chain is Protoheme IX farnesyltransferase from Staphylococcus saprophyticus subsp. saprophyticus (strain ATCC 15305 / DSM 20229 / NCIMB 8711 / NCTC 7292 / S-41).